The sequence spans 339 residues: Methylthioribose-1-phosphate isomerase (339 aa).

Residues 52-54 (RGA), arginine 89, and glutamine 188 each bind substrate. The Proton donor role is filled by aspartate 229. 239-240 (NK) provides a ligand contact to substrate.

It belongs to the eIF-2B alpha/beta/delta subunits family. MtnA subfamily.

It catalyses the reaction 5-(methylsulfanyl)-alpha-D-ribose 1-phosphate = 5-(methylsulfanyl)-D-ribulose 1-phosphate. Its pathway is amino-acid biosynthesis; L-methionine biosynthesis via salvage pathway; L-methionine from S-methyl-5-thio-alpha-D-ribose 1-phosphate: step 1/6. Its function is as follows. Catalyzes the interconversion of methylthioribose-1-phosphate (MTR-1-P) into methylthioribulose-1-phosphate (MTRu-1-P). The protein is Methylthioribose-1-phosphate isomerase of Anaeromyxobacter dehalogenans (strain 2CP-C).